A 40-amino-acid polypeptide reads, in one-letter code: Antimicrobial peptide 2 (40 aa).

One can recognise a Chitin-binding type-1 domain in the interval 1 to 40 (AQCGAQGGGATCPGGLCCSQWGWCGSTPKYCGAGCQSNCR). Intrachain disulfides connect Cys-3–Cys-18, Cys-12–Cys-24, Cys-17–Cys-31, and Cys-35–Cys-39.

Not glycosylated.

In terms of biological role, antimicrobial peptide active against plant pathogenic fungi and Gram-negative and -positive bacteria. This is Antimicrobial peptide 2 from Fagopyrum esculentum (Common buckwheat).